Consider the following 428-residue polypeptide: D-amino acid dehydrogenase (428 aa).

3–17 (VVVLGSGVVGVTSAY) is a binding site for FAD.

This sequence belongs to the DadA oxidoreductase family. It depends on FAD as a cofactor.

The enzyme catalyses a D-alpha-amino acid + A + H2O = a 2-oxocarboxylate + AH2 + NH4(+). It functions in the pathway amino-acid degradation; D-alanine degradation; NH(3) and pyruvate from D-alanine: step 1/1. In terms of biological role, oxidative deamination of D-amino acids. This is D-amino acid dehydrogenase from Paraburkholderia phytofirmans (strain DSM 17436 / LMG 22146 / PsJN) (Burkholderia phytofirmans).